The following is a 34-amino-acid chain: Papillosin (34 aa).

Functionally, has strong antibacterial activity against the Gram-positive bacteria M.luteus, S.aureus, B.megaterium, A.viridans and E.faecalis, and against the Gram-negative bacteria K.pneumoniae, E.coli DH5alpha, S.typhimurium, P.aeruginosa and E.aerogenes. Lacks hemolytic activity against sheep erythrocytes. This chain is Papillosin, found in Halocynthia papillosa (Red sea-squirt).